The chain runs to 600 residues: Elongation factor 4 (600 aa).

The region spanning 4–186 (SKIRNFSIIA…EIVKKIPAPQ (183 aa)) is the tr-type G domain. GTP-binding positions include 16–21 (DHGKST) and 133–136 (NKID).

It belongs to the TRAFAC class translation factor GTPase superfamily. Classic translation factor GTPase family. LepA subfamily.

Its subcellular location is the cell inner membrane. It catalyses the reaction GTP + H2O = GDP + phosphate + H(+). Required for accurate and efficient protein synthesis under certain stress conditions. May act as a fidelity factor of the translation reaction, by catalyzing a one-codon backward translocation of tRNAs on improperly translocated ribosomes. Back-translocation proceeds from a post-translocation (POST) complex to a pre-translocation (PRE) complex, thus giving elongation factor G a second chance to translocate the tRNAs correctly. Binds to ribosomes in a GTP-dependent manner. The sequence is that of Elongation factor 4 from Trichlorobacter lovleyi (strain ATCC BAA-1151 / DSM 17278 / SZ) (Geobacter lovleyi).